Consider the following 358-residue polypeptide: tRNA-specific 2-thiouridylase MnmA (358 aa).

ATP is bound by residues 6 to 13 and Met32; that span reads ALSGGVDS. Cys103 serves as the catalytic Nucleophile. Cys103 and Cys201 are disulfide-bonded. Gly127 is an ATP binding site. Residues 151 to 153 are interaction with tRNA; that stretch reads KDQ. Catalysis depends on Cys201, which acts as the Cysteine persulfide intermediate.

The protein belongs to the MnmA/TRMU family.

Its subcellular location is the cytoplasm. It carries out the reaction S-sulfanyl-L-cysteinyl-[protein] + uridine(34) in tRNA + AH2 + ATP = 2-thiouridine(34) in tRNA + L-cysteinyl-[protein] + A + AMP + diphosphate + H(+). In terms of biological role, catalyzes the 2-thiolation of uridine at the wobble position (U34) of tRNA, leading to the formation of s(2)U34. The protein is tRNA-specific 2-thiouridylase MnmA of Thermotoga sp. (strain RQ2).